Here is an 84-residue protein sequence, read N- to C-terminus: Sulfur carrier protein TusA (84 aa).

Cysteine 19 functions as the Cysteine persulfide intermediate in the catalytic mechanism.

The protein belongs to the sulfur carrier protein TusA family. In terms of assembly, interacts with IscS.

The protein localises to the cytoplasm. It participates in tRNA modification. Sulfur carrier protein involved in sulfur trafficking in the cell. Part of a sulfur-relay system required for 2-thiolation during synthesis of 2-thiouridine of the modified wobble base 5-methylaminomethyl-2-thiouridine (mnm(5)s(2)U) in tRNA. Interacts with IscS and stimulates its cysteine desulfurase activity. Accepts an activated sulfur from IscS, which is then transferred to TusD, and thus determines the direction of sulfur flow from IscS to 2-thiouridine formation. Also appears to be involved in sulfur transfer for the biosynthesis of molybdopterin. This is Sulfur carrier protein TusA from Photorhabdus laumondii subsp. laumondii (strain DSM 15139 / CIP 105565 / TT01) (Photorhabdus luminescens subsp. laumondii).